A 275-amino-acid polypeptide reads, in one-letter code: NH(3)-dependent NAD(+) synthetase (275 aa).

ATP is bound at residue 46-53; the sequence is GISGGQDS. Residue Asp-52 participates in Mg(2+) binding. Arg-140 contributes to the deamido-NAD(+) binding site. ATP is bound at residue Thr-160. Glu-165 lines the Mg(2+) pocket. Deamido-NAD(+)-binding residues include Lys-173 and Asp-180. Positions 189 and 211 each coordinate ATP. 260–261 contacts deamido-NAD(+); that stretch reads HK.

It belongs to the NAD synthetase family. In terms of assembly, homodimer.

The enzyme catalyses deamido-NAD(+) + NH4(+) + ATP = AMP + diphosphate + NAD(+) + H(+). Its pathway is cofactor biosynthesis; NAD(+) biosynthesis; NAD(+) from deamido-NAD(+) (ammonia route): step 1/1. Its function is as follows. Catalyzes the ATP-dependent amidation of deamido-NAD to form NAD. Uses ammonia as a nitrogen source. This chain is NH(3)-dependent NAD(+) synthetase, found in Shigella flexneri serotype 5b (strain 8401).